We begin with the raw amino-acid sequence, 355 residues long: D-alanine--D-alanine ligase (355 aa).

The region spanning 143–350 is the ATP-grasp domain; that stretch reads KTIFSNLKIP…IEQLVAKLVD (208 aa). 178–233 is a binding site for ATP; that stretch reads LKKLNFPFFVKPSNSGSSLGISKVINESEILQSLEKAQKIDSRILVEEGLEVREIE. Residues aspartate 303, glutamate 317, and asparagine 319 each contribute to the Mg(2+) site.

Belongs to the D-alanine--D-alanine ligase family. The cofactor is Mg(2+). Mn(2+) serves as cofactor.

It localises to the cytoplasm. The enzyme catalyses 2 D-alanine + ATP = D-alanyl-D-alanine + ADP + phosphate + H(+). It functions in the pathway cell wall biogenesis; peptidoglycan biosynthesis. Its function is as follows. Cell wall formation. The sequence is that of D-alanine--D-alanine ligase from Prochlorococcus marinus (strain MIT 9215).